Reading from the N-terminus, the 805-residue chain is Transmembrane channel-like protein 6 (805 aa).

Residues 1–29 form a disordered region; sequence MAQPLAFILDVPETPGDQGQGPSPYDESE. Over 1 to 209 the chain is Lumenal; that stretch reads MAQPLAFILD…SCCGRLRYAC (209 aa). At Thr-89 the chain carries Phosphothreonine. Arg-94 is modified (omega-N-methylarginine). Asn-103 carries N-linked (GlcNAc...) asparagine glycosylation. Thr-105 carries the phosphothreonine modification. Residues 210–230 traverse the membrane as a helical segment; sequence VLALHSLGLALLSALQALMPW. At 231 to 249 the chain is on the cytoplasmic side; sequence RYALKRIGGQFGSSVLSYF. A helical transmembrane segment spans residues 250-270; sequence LFLKTLLAFNALLLLLLVAFI. Residues 271–338 lie on the Lumenal side of the membrane; it reads MGPQVAFPPA…TPRVGGLPYN (68 aa). N-linked (GlcNAc...) asparagine glycosylation occurs at Asn-312. Residues 339–359 form a helical membrane-spanning segment; sequence MPLAYLSTVGVSFFITCITLV. Residues 360–431 are Cytoplasmic-facing; that stretch reads YSMAHSFGES…RSVCGRLRQA (72 aa). The helical transmembrane segment at 432-452 threads the bilayer; that stretch reads AVLGLVWLLCLGTALGCAVAV. The Lumenal segment spans residues 453 to 469; sequence HVFSEFMIQSPEAAGQE. Residues 470 to 490 form a helical membrane-spanning segment; sequence AVLLVLPLVVGLLNLGAPYLC. The Cytoplasmic segment spans residues 491–505; sequence RVLAALEPHDSPVLE. The chain crosses the membrane as a helical span at residues 506–526; it reads VYVAICRNLILKLAILGTLCY. Over 527 to 553 the chain is Lumenal; the sequence is HWLGRRVGVLQGQCWEDFVGQELYRFL. A helical membrane pass occupies residues 554-574; it reads VMDFVLMLLDTLFGELVWRII. Residues 575-604 are Cytoplasmic-facing; the sequence is SEKKLKRRRKPEFDIARNVLELIYGQTLTW. The helical transmembrane segment at 605 to 625 threads the bilayer; it reads LGVLFSPLLPAVQIIKLLLVF. At 626–650 the chain is on the lumenal side; sequence YVKKTSLLANCQAPRRPWLASHMST. Residues 651 to 671 form a helical membrane-spanning segment; sequence VFLTLLCFPAFLGAAVFLCYA. Topologically, residues 672–722 are cytoplasmic; sequence VWQVKPSSTCGPFRTLDTMYEAGRVWVRHLEAAGPRVSWLPWVHRYLMENT. The chain crosses the membrane as a helical span at residues 723-743; sequence FFVFLVSALLLAVIYLNIQVV. Topologically, residues 744-805 are lumenal; it reads RGQRKVICLL…PALLTDEQDA (62 aa). Residues 778-805 are disordered; it reads KEREERSRVGTTEEAAAPPALLTDEQDA.

Belongs to the TMC family. Interacts with TMC8. Interacts and forms a complex with TMC8 and CIB1; the interaction stabilizes each component of the complex. Interacts and forms a complex with TMC8 and SLC30A1/ZNT1; the interaction regulates zinc transport into the ER. As to quaternary structure, (Microbial infection) Interacts with human papillomavirus 16/HPV16 protein E5; the interaction alleviates TMC6-mediated transcription factors inhibition. In terms of tissue distribution, expressed in placenta, prostate, testis, activated T-lymphocytes and lymphokine-activated killer (LAK) lymphocytes.

Its subcellular location is the endoplasmic reticulum membrane. The protein localises to the golgi apparatus membrane. The protein resides in the nucleus membrane. Acts as a regulatory protein involved in the regulation of numerous cellular processes. Together with its homolog TMC8/EVER2, forms a complex with CIB1 in lymphocytes and keratynocytes where TMC6 and TMC8 stabilize CIB1 and reciprocally. Together with TMC8, also forms a complex with and activates zinc transporter ZNT1 at the ER membrane of keratynocytes, thereby facilitating zinc uptake into the ER. Down-regulates the activity of transcription factors induced by zinc and cytokines. Also plays a role in thermal sensation by inhibiting the M-channel (KCNQ2-KCNQ3 channel) current in primary sensory neurons. The sequence is that of Transmembrane channel-like protein 6 from Homo sapiens (Human).